A 283-amino-acid chain; its full sequence is 4-diphosphocytidyl-2-C-methyl-D-erythritol kinase (283 aa).

Lys-10 is an active-site residue. ATP is bound at residue 99–109 (PMGGGLGGGSS). Residue Asp-141 is part of the active site.

This sequence belongs to the GHMP kinase family. IspE subfamily. Homodimer.

The catalysed reaction is 4-CDP-2-C-methyl-D-erythritol + ATP = 4-CDP-2-C-methyl-D-erythritol 2-phosphate + ADP + H(+). It functions in the pathway isoprenoid biosynthesis; isopentenyl diphosphate biosynthesis via DXP pathway; isopentenyl diphosphate from 1-deoxy-D-xylulose 5-phosphate: step 3/6. Functionally, catalyzes the phosphorylation of the position 2 hydroxy group of 4-diphosphocytidyl-2C-methyl-D-erythritol. This chain is 4-diphosphocytidyl-2-C-methyl-D-erythritol kinase, found in Salmonella choleraesuis (strain SC-B67).